Consider the following 389-residue polypeptide: SH3 and F-BAR domain-containing protein DDB_G0274695 (389 aa).

The F-BAR domain maps to 3 to 258 (EQFKDNFWGP…VITQIDKLED (256 aa)). Residues 119-192 (KLNKERKDME…QDYRDSVNKL (74 aa)) adopt a coiled-coil conformation. Over residues 300-328 (LTSSVSSNSLTSSYNSATTTPTPAPRSTP) the composition is skewed to low complexity. A disordered region spans residues 300–329 (LTSSVSSNSLTSSYNSATTTPTPAPRSTPI). One can recognise an SH3 domain in the interval 332 to 389 (SKKKQAKALYDYVGSDATELDFFAGDIITILDEDESGWFRGELGDRIGLYPSNYCEPI).

The chain is SH3 and F-BAR domain-containing protein DDB_G0274695 from Dictyostelium discoideum (Social amoeba).